Here is a 102-residue protein sequence, read N- to C-terminus: Protein RnfH (102 aa).

It belongs to the UPF0125 (RnfH) family.

The protein is Protein RnfH of Haemophilus influenzae (strain PittEE).